A 474-amino-acid chain; its full sequence is ATP synthase subunit beta (474 aa).

152–159 (GGAGVGKT) is a binding site for ATP.

This sequence belongs to the ATPase alpha/beta chains family. F-type ATPases have 2 components, CF(1) - the catalytic core - and CF(0) - the membrane proton channel. CF(1) has five subunits: alpha(3), beta(3), gamma(1), delta(1), epsilon(1). CF(0) has three main subunits: a(1), b(2) and c(9-12). The alpha and beta chains form an alternating ring which encloses part of the gamma chain. CF(1) is attached to CF(0) by a central stalk formed by the gamma and epsilon chains, while a peripheral stalk is formed by the delta and b chains.

Its subcellular location is the cell inner membrane. The enzyme catalyses ATP + H2O + 4 H(+)(in) = ADP + phosphate + 5 H(+)(out). Produces ATP from ADP in the presence of a proton gradient across the membrane. The catalytic sites are hosted primarily by the beta subunits. The sequence is that of ATP synthase subunit beta from Magnetococcus marinus (strain ATCC BAA-1437 / JCM 17883 / MC-1).